Here is a 138-residue protein sequence, read N- to C-terminus: Large ribosomal subunit protein eL14B (138 aa).

At serine 2 the chain carries N-acetylserine.

Belongs to the eukaryotic ribosomal protein eL14 family. In terms of assembly, component of the large ribosomal subunit (LSU). Mature yeast ribosomes consist of a small (40S) and a large (60S) subunit. The 40S small subunit contains 1 molecule of ribosomal RNA (18S rRNA) and 33 different proteins (encoded by 57 genes). The large 60S subunit contains 3 rRNA molecules (25S, 5.8S and 5S rRNA) and 46 different proteins (encoded by 81 genes). Post-translationally, N-terminally acetylated by acetyltransferase NatA.

It is found in the cytoplasm. Its function is as follows. Component of the ribosome, a large ribonucleoprotein complex responsible for the synthesis of proteins in the cell. The small ribosomal subunit (SSU) binds messenger RNAs (mRNAs) and translates the encoded message by selecting cognate aminoacyl-transfer RNA (tRNA) molecules. The large subunit (LSU) contains the ribosomal catalytic site termed the peptidyl transferase center (PTC), which catalyzes the formation of peptide bonds, thereby polymerizing the amino acids delivered by tRNAs into a polypeptide chain. The nascent polypeptides leave the ribosome through a tunnel in the LSU and interact with protein factors that function in enzymatic processing, targeting, and the membrane insertion of nascent chains at the exit of the ribosomal tunnel. This chain is Large ribosomal subunit protein eL14B, found in Saccharomyces cerevisiae (strain ATCC 204508 / S288c) (Baker's yeast).